Reading from the N-terminus, the 209-residue chain is Large ribosomal subunit protein uL4 (209 aa).

The tract at residues 45–77 (RQGTHKAKERAEVTGSTRKIKKQKGTGTARAGS) is disordered.

The protein belongs to the universal ribosomal protein uL4 family. In terms of assembly, part of the 50S ribosomal subunit.

Functionally, one of the primary rRNA binding proteins, this protein initially binds near the 5'-end of the 23S rRNA. It is important during the early stages of 50S assembly. It makes multiple contacts with different domains of the 23S rRNA in the assembled 50S subunit and ribosome. In terms of biological role, forms part of the polypeptide exit tunnel. The sequence is that of Large ribosomal subunit protein uL4 from Flavobacterium johnsoniae (strain ATCC 17061 / DSM 2064 / JCM 8514 / BCRC 14874 / CCUG 350202 / NBRC 14942 / NCIMB 11054 / UW101) (Cytophaga johnsonae).